The sequence spans 252 residues: Adenosylcobinamide-GDP ribazoletransferase (252 aa).

7 helical membrane-spanning segments follow: residues 35–55 (AMLP…FYIL), 58–78 (IFPA…LIGG), 113–133 (FAVL…SFII), 139–159 (YAII…FLIG), 170–190 (LFIE…MIVP), 192–212 (VLLI…IITL), and 231–251 (GANN…LLYI).

The protein belongs to the CobS family. The cofactor is Mg(2+).

The protein resides in the cell membrane. The catalysed reaction is alpha-ribazole + adenosylcob(III)inamide-GDP = adenosylcob(III)alamin + GMP + H(+). The enzyme catalyses alpha-ribazole 5'-phosphate + adenosylcob(III)inamide-GDP = adenosylcob(III)alamin 5'-phosphate + GMP + H(+). It participates in cofactor biosynthesis; adenosylcobalamin biosynthesis; adenosylcobalamin from cob(II)yrinate a,c-diamide: step 7/7. In terms of biological role, joins adenosylcobinamide-GDP and alpha-ribazole to generate adenosylcobalamin (Ado-cobalamin). Also synthesizes adenosylcobalamin 5'-phosphate from adenosylcobinamide-GDP and alpha-ribazole 5'-phosphate. This chain is Adenosylcobinamide-GDP ribazoletransferase, found in Clostridium tetani (strain Massachusetts / E88).